Consider the following 550-residue polypeptide: Mitochondrial distribution and morphology protein 12 (550 aa).

An SMP-LTD domain is found at 1-550 (MSIDLNWETV…VYPSYWTFLV (550 aa)). 3 disordered regions span residues 76–97 (SDLASESGSEEDEEEIADDRRR), 196–386 (GHGH…KLRE), and 466–489 (ENEVDGGEGDKQTGFKSPPGGGNG). Acidic residues predominate over residues 83-92 (GSEEDEEEIA). Positions 270–286 (PPFPPSSTGGPSPPPGL) are enriched in pro residues. Residues 288–305 (KPHHPHHPHHHHAHHAHP) are compositionally biased toward basic residues. A compositionally biased stretch (basic and acidic residues) spans 327-344 (PTRDKTTPSHHPDPEDVH). The segment covering 346–355 (PNTTTTNKQR) has biased composition (polar residues). Residues 356–371 (STSPATSSPLATSAQE) show a composition bias toward low complexity.

The protein belongs to the MDM12 family. In terms of assembly, component of the ER-mitochondria encounter structure (ERMES) or MDM complex, composed of MMM1, MDM10, MDM12 and MDM34. An MMM1 homodimer associates with one molecule of MDM12 on each side in a pairwise head-to-tail manner, and the SMP-LTD domains of MMM1 and MDM12 generate a continuous hydrophobic tunnel for phospholipid trafficking.

The protein resides in the mitochondrion outer membrane. It localises to the endoplasmic reticulum membrane. Component of the ERMES/MDM complex, which serves as a molecular tether to connect the endoplasmic reticulum (ER) and mitochondria. Components of this complex are involved in the control of mitochondrial shape and protein biogenesis, and function in nonvesicular lipid trafficking between the ER and mitochondria. MDM12 is required for the interaction of the ER-resident membrane protein MMM1 and the outer mitochondrial membrane-resident beta-barrel protein MDM10. The MDM12-MMM1 subcomplex functions in the major beta-barrel assembly pathway that is responsible for biogenesis of all mitochondrial outer membrane beta-barrel proteins, and acts in a late step after the SAM complex. The MDM10-MDM12-MMM1 subcomplex further acts in the TOM40-specific pathway after the action of the MDM12-MMM1 complex. Essential for establishing and maintaining the structure of mitochondria and maintenance of mtDNA nucleoids. The protein is Mitochondrial distribution and morphology protein 12 of Podospora anserina (strain S / ATCC MYA-4624 / DSM 980 / FGSC 10383) (Pleurage anserina).